Consider the following 354-residue polypeptide: GTPase Obg (354 aa).

Residues 1 to 159 (MKFLDQCKIY…RWIWLRLKLI (159 aa)) enclose the Obg domain. Residues 160–328 (ADVGLVGLPN…LLRAAYKQVR (169 aa)) enclose the OBG-type G domain. GTP contacts are provided by residues 166–173 (GLPNAGKS), 191–195 (FTTLT), 213–216 (DIPG), 280–283 (NKID), and 309–311 (SGV). Residues serine 173 and threonine 193 each contribute to the Mg(2+) site. Over residues 335–345 (EEEIDDDEDHV) the composition is skewed to acidic residues. Positions 335 to 354 (EEEIDDDEDHVDETPGGWTP) are disordered.

This sequence belongs to the TRAFAC class OBG-HflX-like GTPase superfamily. OBG GTPase family. As to quaternary structure, monomer. Mg(2+) is required as a cofactor.

The protein resides in the cytoplasm. Functionally, an essential GTPase which binds GTP, GDP and possibly (p)ppGpp with moderate affinity, with high nucleotide exchange rates and a fairly low GTP hydrolysis rate. Plays a role in control of the cell cycle, stress response, ribosome biogenesis and in those bacteria that undergo differentiation, in morphogenesis control. This Caulobacter vibrioides (strain ATCC 19089 / CIP 103742 / CB 15) (Caulobacter crescentus) protein is GTPase Obg.